Here is a 297-residue protein sequence, read N- to C-terminus: Ribosomal protein L11 methyltransferase (297 aa).

S-adenosyl-L-methionine is bound by residues T139, G164, D186, and N233.

It belongs to the methyltransferase superfamily. PrmA family.

The protein resides in the cytoplasm. It carries out the reaction L-lysyl-[protein] + 3 S-adenosyl-L-methionine = N(6),N(6),N(6)-trimethyl-L-lysyl-[protein] + 3 S-adenosyl-L-homocysteine + 3 H(+). Methylates ribosomal protein L11. The protein is Ribosomal protein L11 methyltransferase of Trichodesmium erythraeum (strain IMS101).